The chain runs to 115 residues: Putative HNH nuclease YajD (115 aa).

The HNH domain occupies 27–75; the sequence is CGRCSREFVYSNLRELTVHHIDHDHTNNPEDGSNWELLCLYCHDHEHSK.

Belongs to the HNH nuclease family.

The chain is Putative HNH nuclease YajD (yajD) from Escherichia coli O157:H7.